Consider the following 37-residue polypeptide: Cytochrome b6-f complex subunit 5 (37 aa).

Residues 5 to 25 (FLFGIVLGLIPITLTGLFVTA) form a helical membrane-spanning segment.

The protein belongs to the PetG family. As to quaternary structure, the 4 large subunits of the cytochrome b6-f complex are cytochrome b6, subunit IV (17 kDa polypeptide, PetD), cytochrome f and the Rieske protein, while the 4 small subunits are PetG, PetL, PetM and PetN. The complex functions as a dimer.

It localises to the plastid. The protein resides in the chloroplast thylakoid membrane. In terms of biological role, component of the cytochrome b6-f complex, which mediates electron transfer between photosystem II (PSII) and photosystem I (PSI), cyclic electron flow around PSI, and state transitions. PetG is required for either the stability or assembly of the cytochrome b6-f complex. This chain is Cytochrome b6-f complex subunit 5, found in Phalaenopsis aphrodite subsp. formosana (Moth orchid).